The sequence spans 165 residues: MPLNKESKQAVVAEVSAQVAKAQTVVLAEYRGITVGDLTKLRAKAREQQVYLRVLKNTLARRAVEGTPFAPLAEQMTGPLIYGISEDAIAAAKVVNDFSKSNDKLIIKAGSYEGKVMDKAGVQALANIPSREELLSKLLFVMQAPVSGFARALAALAEKKQGEAA.

The protein belongs to the universal ribosomal protein uL10 family. Part of the ribosomal stalk of the 50S ribosomal subunit. The N-terminus interacts with L11 and the large rRNA to form the base of the stalk. The C-terminus forms an elongated spine to which L12 dimers bind in a sequential fashion forming a multimeric L10(L12)X complex.

Its function is as follows. Forms part of the ribosomal stalk, playing a central role in the interaction of the ribosome with GTP-bound translation factors. This is Large ribosomal subunit protein uL10 from Paraburkholderia phymatum (strain DSM 17167 / CIP 108236 / LMG 21445 / STM815) (Burkholderia phymatum).